Reading from the N-terminus, the 303-residue chain is Glycine--tRNA ligase alpha subunit (303 aa).

The protein belongs to the class-II aminoacyl-tRNA synthetase family. Tetramer of two alpha and two beta subunits.

It is found in the cytoplasm. The catalysed reaction is tRNA(Gly) + glycine + ATP = glycyl-tRNA(Gly) + AMP + diphosphate. This chain is Glycine--tRNA ligase alpha subunit, found in Methylobacterium radiotolerans (strain ATCC 27329 / DSM 1819 / JCM 2831 / NBRC 15690 / NCIMB 10815 / 0-1).